A 562-amino-acid chain; its full sequence is Potassium-transporting ATPase potassium-binding subunit (562 aa).

The next 12 membrane-spanning stretches (helical) occupy residues 6 to 26 (FLLI…LGGF), 62 to 82 (YALA…VLLM), 132 to 152 (GLTV…FALI), 175 to 195 (LYVL…QGVL), 253 to 273 (FVQM…FGQV), 283 to 303 (LIWA…YAEL), 327 to 347 (FGIL…CGAV), 356 to 376 (ALGG…FGGV), 379 to 399 (GLYG…LMIG), 416 to 436 (MTAL…ALAL), 483 to 503 (LLLA…VLAI), and 526 to 546 (LFIG…FIPA).

This sequence belongs to the KdpA family. In terms of assembly, the system is composed of three essential subunits: KdpA, KdpB and KdpC.

The protein resides in the cell inner membrane. Its function is as follows. Part of the high-affinity ATP-driven potassium transport (or Kdp) system, which catalyzes the hydrolysis of ATP coupled with the electrogenic transport of potassium into the cytoplasm. This subunit binds the periplasmic potassium ions and delivers the ions to the membrane domain of KdpB through an intramembrane tunnel. The protein is Potassium-transporting ATPase potassium-binding subunit of Yersinia pseudotuberculosis serotype I (strain IP32953).